Consider the following 82-residue polypeptide: Small ribosomal subunit protein uS17 (82 aa).

Belongs to the universal ribosomal protein uS17 family. As to quaternary structure, part of the 30S ribosomal subunit.

Functionally, one of the primary rRNA binding proteins, it binds specifically to the 5'-end of 16S ribosomal RNA. The protein is Small ribosomal subunit protein uS17 of Shewanella denitrificans (strain OS217 / ATCC BAA-1090 / DSM 15013).